An 882-amino-acid chain; its full sequence is Alanine--tRNA ligase (882 aa).

Zn(2+)-binding residues include histidine 571, histidine 575, cysteine 673, and histidine 677.

The protein belongs to the class-II aminoacyl-tRNA synthetase family. The cofactor is Zn(2+).

Its subcellular location is the cytoplasm. The catalysed reaction is tRNA(Ala) + L-alanine + ATP = L-alanyl-tRNA(Ala) + AMP + diphosphate. In terms of biological role, catalyzes the attachment of alanine to tRNA(Ala) in a two-step reaction: alanine is first activated by ATP to form Ala-AMP and then transferred to the acceptor end of tRNA(Ala). Also edits incorrectly charged Ser-tRNA(Ala) and Gly-tRNA(Ala) via its editing domain. The chain is Alanine--tRNA ligase from Stenotrophomonas maltophilia (strain K279a).